Here is a 216-residue protein sequence, read N- to C-terminus: DNA replication complex GINS protein PSF3 (216 aa).

Residues 1–16 (MSEAYFPVESGALGPE) form a not essential for folding and stability of GINS complex, but may regulate accessibility to the central complex pore region.

The protein belongs to the GINS3/PSF3 family. As to quaternary structure, component of the GINS complex which is a heterotetramer of GINS1, GINS2, GINS3 and GINS4. Forms a stable subcomplex with GINS2. GINS complex interacts with DNA primase in vitro. Component of the CMG helicase complex, a hexameric ring of related MCM2-7 subunits stabilized by CDC45 and the tetrameric GINS complex.

The protein localises to the nucleus. It localises to the chromosome. Its function is as follows. Required for correct functioning of the GINS complex, a complex that plays an essential role in the initiation of DNA replication, and progression of DNA replication forks. GINS complex is a core component of CDC45-MCM-GINS (CMG) helicase, the molecular machine that unwinds template DNA during replication, and around which the replisome is built. This Mus musculus (Mouse) protein is DNA replication complex GINS protein PSF3 (Gins3).